A 205-amino-acid chain; its full sequence is Phosphoenolpyruvate guanylyltransferase (205 aa).

Phosphoenolpyruvate-binding residues include Thr137, Gly153, and Ser156.

Belongs to the CofC family.

It carries out the reaction phosphoenolpyruvate + GTP + H(+) = enolpyruvoyl-2-diphospho-5'-guanosine + diphosphate. Its pathway is cofactor biosynthesis; coenzyme F420 biosynthesis. Functionally, guanylyltransferase that catalyzes the activation of phosphoenolpyruvate (PEP) as enolpyruvoyl-2-diphospho-5'-guanosine, via the condensation of PEP with GTP. It is involved in the biosynthesis of coenzyme F420, a hydride carrier cofactor. The chain is Phosphoenolpyruvate guanylyltransferase from Rubrobacter xylanophilus (strain DSM 9941 / JCM 11954 / NBRC 16129 / PRD-1).